The sequence spans 114 residues: Putative protein TfaS (114 aa).

It belongs to the tfa family.

This is Putative protein TfaS (tfaS) from Escherichia coli (strain K12).